The following is a 315-amino-acid chain: Cytochrome c biogenesis protein CcsA (315 aa).

The next 7 membrane-spanning stretches (helical) occupy residues 17 to 37 (LGFA…WAVA), 72 to 92 (ISNL…AQLF), 101 to 121 (IVSA…SFVL), 146 to 166 (VIMC…GVFL), 221 to 241 (SITA…VWAN), 255 to 272 (TWAL…HTRI), and 282 to 302 (AILA…VNLL).

Belongs to the CcmF/CycK/Ccl1/NrfE/CcsA family. May interact with ccs1.

The protein localises to the cellular thylakoid membrane. In terms of biological role, required during biogenesis of c-type cytochromes (cytochrome c6 and cytochrome f) at the step of heme attachment. This chain is Cytochrome c biogenesis protein CcsA, found in Prochlorococcus marinus (strain NATL2A).